Here is a 299-residue protein sequence, read N- to C-terminus: Ankyrin repeat domain-containing protein 54 (299 aa).

Positions 1–27 are disordered; the sequence is MAATGGGADDESRSGRSSSDGECAVAP. Ala-2 is modified (N-acetylalanine). Ser-62 bears the Phosphoserine mark. Positions 98-116 match the Nuclear localization signal (NLS) motif; sequence RRLGPTGKEVHALKRLRDS. ANK repeat units lie at residues 108–137, 141–170, 174–203, and 207–239; these read HALK…DPCA, KGRT…DPNQ, LGNT…RVDA, and AGRT…EVKQ. The LYN-binding stretch occupies residues 140-240; it reads DKGRTALHFA…EAVRLEVKQI (101 aa). Positions 282–292 match the Nuclear export signal (NES) motif; it reads LLASFTSLSLQ.

In terms of assembly, interacts (via ankyrin repeat region) with LYN (via SH3-domain) in an activation-independent status of LYN. Forms a multiprotein complex with LYN and HCLS1. Interacts with TSN2, VAV1, DBNL and LASP1. Expressed in a variety of hemopoietic cell lines and tissue with high levels in testis. Highly expressed in ciliated cells.

The protein localises to the nucleus. Its subcellular location is the cytoplasm. It localises to the midbody. Functionally, plays an important role in regulating intracellular signaling events associated with erythroid terminal differentiation. The chain is Ankyrin repeat domain-containing protein 54 (Ankrd54) from Mus musculus (Mouse).